The sequence spans 505 residues: Glutamate--tRNA ligase (505 aa).

Positions 12 to 22 (PSPTGDPHVGT) match the 'HIGH' region motif. The 'KMSKS' region motif lies at 253–257 (KLSKR). Lys256 serves as a coordination point for ATP.

Belongs to the class-I aminoacyl-tRNA synthetase family. Glutamate--tRNA ligase type 1 subfamily. Monomer.

The protein resides in the cytoplasm. The enzyme catalyses tRNA(Glu) + L-glutamate + ATP = L-glutamyl-tRNA(Glu) + AMP + diphosphate. In terms of biological role, catalyzes the attachment of glutamate to tRNA(Glu) in a two-step reaction: glutamate is first activated by ATP to form Glu-AMP and then transferred to the acceptor end of tRNA(Glu). This Chlamydia abortus (strain DSM 27085 / S26/3) (Chlamydophila abortus) protein is Glutamate--tRNA ligase.